Reading from the N-terminus, the 468-residue chain is MASALDDPALQRHFKGHKDAVTCVDFSPDSKQLASSSADACVMIWNFKPQSRAYKYPGHKEAVTCVQFSPSGHLVASSSKDRTVRLWAPNIKGESTVLKAHTAVVRCVNFSSDGQTFITASDDKSIKAWNLHRQRFLFSLTQHTNWVRCARFSPDGRLIASCSDDKTVRIWDLTNRLCINTFVDYKGHSNYVDFNQMGTCVASAGADSTVKVWDIRMNKLLQHYQVHNAGVSSLSFHPSGNYLLTASSDGTLKILDLLEGRLIYTLHGHQGPVLSVTFSKSGDQFASGATDAQVLVWKTNFDKYSVKEIVKLQQKRTCPEAPPHLNDIYPRTPHLHSSSGHSIEINPMCEVADTQTFDPPIINVGANLPYCRRTKAVHTLNKHVRNDNYPTPPVAFSYTEGQKEHPLVEEQGVLPPSLSNTLEQIVDQLNVLTQTVSILEHRLTLTEDKLKECLENQQKTSAHASESD.

WD repeat units lie at residues G16–K55, G58–V97, A100–S139, Q142–T181, D184–H223, V226–T265, and G268–K307. A coiled-coil region spans residues N420–K459.

It belongs to the WD repeat POC1 family. In terms of assembly, interacts with pat. In terms of tissue distribution, highly expressed in ovary and, at low levels, in testis.

Its subcellular location is the cytoplasm. The protein resides in the cytoskeleton. The protein localises to the microtubule organizing center. It localises to the centrosome. It is found in the centriole. Plays an important role in centriole assembly and/or stability and ciliogenesis. Involved in early steps of centriole duplication, as well as in the later steps of centriole length control. The polypeptide is POC1 centriolar protein homolog B (poc1b) (Xenopus laevis (African clawed frog)).